We begin with the raw amino-acid sequence, 203 residues long: Guanylate kinase (203 aa).

The region spanning 5 to 183 (GVLYILSAPS…AVEELKSVII (179 aa)) is the Guanylate kinase-like domain. 12–19 (APSGAGKT) is an ATP binding site.

This sequence belongs to the guanylate kinase family.

It localises to the cytoplasm. The catalysed reaction is GMP + ATP = GDP + ADP. Functionally, essential for recycling GMP and indirectly, cGMP. The polypeptide is Guanylate kinase (Geobacter sulfurreducens (strain ATCC 51573 / DSM 12127 / PCA)).